Here is a 261-residue protein sequence, read N- to C-terminus: 4-hydroxy-tetrahydrodipicolinate reductase (261 aa).

NAD(+)-binding positions include 11–16, 96–98, and 122–125; these read GFTGAM, GTT, and APNF. H152 (proton donor/acceptor) is an active-site residue. (S)-2,3,4,5-tetrahydrodipicolinate is bound at residue H153. The active-site Proton donor is K156. 162–163 provides a ligand contact to (S)-2,3,4,5-tetrahydrodipicolinate; it reads GT.

Belongs to the DapB family.

The protein resides in the cytoplasm. The catalysed reaction is (S)-2,3,4,5-tetrahydrodipicolinate + NAD(+) + H2O = (2S,4S)-4-hydroxy-2,3,4,5-tetrahydrodipicolinate + NADH + H(+). It carries out the reaction (S)-2,3,4,5-tetrahydrodipicolinate + NADP(+) + H2O = (2S,4S)-4-hydroxy-2,3,4,5-tetrahydrodipicolinate + NADPH + H(+). It participates in amino-acid biosynthesis; L-lysine biosynthesis via DAP pathway; (S)-tetrahydrodipicolinate from L-aspartate: step 4/4. Its function is as follows. Catalyzes the conversion of 4-hydroxy-tetrahydrodipicolinate (HTPA) to tetrahydrodipicolinate. This Lactobacillus acidophilus (strain ATCC 700396 / NCK56 / N2 / NCFM) protein is 4-hydroxy-tetrahydrodipicolinate reductase.